Consider the following 103-residue polypeptide: Histone H4 (103 aa).

Residues 1–14 (MSGRGKGGKGLGKG) are compositionally biased toward gly residues. The interval 1-20 (MSGRGKGGKGLGKGGAKRHR) is disordered. A DNA-binding region spans residues 17-21 (KRHRK).

The protein belongs to the histone H4 family. In terms of assembly, the nucleosome is a histone octamer containing two molecules each of H2A, H2B, H3 and H4 assembled in one H3-H4 heterotetramer and two H2A-H2B heterodimers. The octamer wraps approximately 147 bp of DNA.

It localises to the nucleus. It is found in the chromosome. Functionally, core component of nucleosome. Nucleosomes wrap and compact DNA into chromatin, limiting DNA accessibility to the cellular machineries which require DNA as a template. Histones thereby play a central role in transcription regulation, DNA repair, DNA replication and chromosomal stability. DNA accessibility is regulated via a complex set of post-translational modifications of histones, also called histone code, and nucleosome remodeling. The chain is Histone H4 (H41) from Physarum polycephalum (Slime mold).